The chain runs to 363 residues: Ribosomal RNA large subunit methyltransferase M (363 aa).

Residues Ser-194, 227–230, Asp-246, Asp-266, and Asp-284 each bind S-adenosyl-L-methionine; that span reads CPGG. Residue Lys-313 is the Proton acceptor of the active site.

It belongs to the class I-like SAM-binding methyltransferase superfamily. RNA methyltransferase RlmE family. RlmM subfamily. In terms of assembly, monomer.

The protein resides in the cytoplasm. The enzyme catalyses cytidine(2498) in 23S rRNA + S-adenosyl-L-methionine = 2'-O-methylcytidine(2498) in 23S rRNA + S-adenosyl-L-homocysteine + H(+). In terms of biological role, catalyzes the 2'-O-methylation at nucleotide C2498 in 23S rRNA. This is Ribosomal RNA large subunit methyltransferase M from Haemophilus influenzae (strain PittGG).